Consider the following 968-residue polypeptide: RNA polymerase-associated protein RapA (968 aa).

One can recognise a Helicase ATP-binding domain in the interval 164 to 334 (DVGRRHAPRV…FARLRLLDPD (171 aa)). 177-184 (DEVGLGKT) contacts ATP. Residues 280–283 (DEAH) carry the DEAH box motif. Residues 490-643 (RVEWLMGYLT…HTCPTGRAVY (154 aa)) form the Helicase C-terminal domain.

It belongs to the SNF2/RAD54 helicase family. RapA subfamily. As to quaternary structure, interacts with the RNAP. Has a higher affinity for the core RNAP than for the holoenzyme. Its ATPase activity is stimulated by binding to RNAP.

Its function is as follows. Transcription regulator that activates transcription by stimulating RNA polymerase (RNAP) recycling in case of stress conditions such as supercoiled DNA or high salt concentrations. Probably acts by releasing the RNAP, when it is trapped or immobilized on tightly supercoiled DNA. Does not activate transcription on linear DNA. Probably not involved in DNA repair. The chain is RNA polymerase-associated protein RapA from Erwinia tasmaniensis (strain DSM 17950 / CFBP 7177 / CIP 109463 / NCPPB 4357 / Et1/99).